We begin with the raw amino-acid sequence, 224 residues long: PHD finger-containing protein 5 (224 aa).

The segment at 31 to 81 adopts a PHD-type zinc-finger fold; the sequence is KKPCEVCGSDANELLMMTCFMCRDTREHTYCARVMFQRVPRLWICEECRDF. Residues Cys34, Cys37, Cys49, Cys52, His58, Cys61, Cys75, and Cys78 each contribute to the Zn(2+) site. Residues 116–137 are disordered; it reads PRTNQVVDNHQDPPIDQTDPSS.

Interacts directly with AIPP3/BDT1.

Its function is as follows. Together with AIPP3/BDT1, cooperates to form a BAH-PHD bivalent histone reader complex able to read histone H3 lysine 27 trimethylation (H3K27me3) histone marks in order to regulate transcription, especially to prevent early flowering; promotes AIPP3/BDT1 binding to H3K27me3. This Arabidopsis thaliana (Mouse-ear cress) protein is PHD finger-containing protein 5.